The following is a 488-amino-acid chain: Glutamyl-tRNA(Gln) amidotransferase subunit A (488 aa).

Active-site charge relay system residues include Lys77 and Ser152. Ser176 acts as the Acyl-ester intermediate in catalysis.

Belongs to the amidase family. GatA subfamily. In terms of assembly, heterotrimer of A, B and C subunits.

The enzyme catalyses L-glutamyl-tRNA(Gln) + L-glutamine + ATP + H2O = L-glutaminyl-tRNA(Gln) + L-glutamate + ADP + phosphate + H(+). Allows the formation of correctly charged Gln-tRNA(Gln) through the transamidation of misacylated Glu-tRNA(Gln) in organisms which lack glutaminyl-tRNA synthetase. The reaction takes place in the presence of glutamine and ATP through an activated gamma-phospho-Glu-tRNA(Gln). The protein is Glutamyl-tRNA(Gln) amidotransferase subunit A of Streptococcus pyogenes serotype M4 (strain MGAS10750).